The sequence spans 313 residues: HTH-type transcriptional regulator CysB (313 aa).

Residues 1-59 (MNLHQFRFVREAVRQNFNLTEAAKALYTSQPGVSKAIIELEDELGVEIFTRHGKRVRSL) enclose the HTH lysR-type domain. Positions 19–38 (LTEAAKALYTSQPGVSKAII) form a DNA-binding region, H-T-H motif.

Belongs to the LysR transcriptional regulatory family.

Functionally, transcriptional regulator preferentially involved in the control of sulfate transport and reduction. Binds to DNA at target promoter regions. This chain is HTH-type transcriptional regulator CysB, found in Burkholderia cenocepacia (strain ATCC BAA-245 / DSM 16553 / LMG 16656 / NCTC 13227 / J2315 / CF5610) (Burkholderia cepacia (strain J2315)).